The primary structure comprises 26 residues: GVKDYFKKLLQKVINKIKSFRKKQEA.

As to expression, expressed by the venom gland.

Its subcellular location is the secreted. In terms of biological role, may have cytolytic and antimicrobial activity. The chain is Oxyopinin-3b from Oxyopes takobius (Lynx spider).